The chain runs to 624 residues: Basal cell adhesion molecule (624 aa).

The N-terminal stretch at 1–25 is a signal peptide; it reads MEPPDARAGLLWLTLLLSGYSGAQA. 2 Ig-like V-type domains span residues 26–136 and 141–251; these read ELHV…SSVR and PEAT…HTFR. Topologically, residues 26–543 are extracellular; the sequence is ELHVSVPPRV…GSVAPQTAQA (518 aa). 3 cysteine pairs are disulfide-bonded: Cys47–Cys119, Cys166–Cys231, and Cys285–Cys331. Ig-like C2-type domains are found at residues 268–343, 357–436, and 443–534; these read PSTT…EEVQ, PLEL…QSFQ, and PELK…FHFG. Asn315, Asn371, and Asn378 each carry an N-linked (GlcNAc...) asparagine glycan. Disulfide bonds link Cys379–Cys419 and Cys468–Cys518. The interval 477–497 is disordered; the sequence is KLTWSQRGDTTPAEPPFEGRG. The chain crosses the membrane as a helical span at residues 544–564; it reads GVAVMAVAVSVGLLLLVVAAF. The Cytoplasmic portion of the chain corresponds to 565–624; it reads YCMRRKGRPGCCQRAEKGAPPAREPELSHSGSERPEHTGLLMGGPSGGGRGGNGGFGDEC. A disordered region spans residues 574–624; that stretch reads GCCQRAEKGAPPAREPELSHSGSERPEHTGLLMGGPSGGGRGGNGGFGDEC. Over residues 587-601 the composition is skewed to basic and acidic residues; that stretch reads REPELSHSGSERPEH. Ser592, Ser594, and Ser596 each carry phosphoserine. The segment covering 605–624 has biased composition (gly residues); it reads LMGGPSGGGRGGNGGFGDEC.

As to quaternary structure, homodimer. Interacts with ITGA4:ITGB1. Interacts with spectrins SPTA1 and SPTB1.

The protein resides in the cell membrane. In terms of biological role, transmembrane glycoprotein that functions as both a receptor and an adhesion molecule playing a crucial role in cell adhesion, motility, migration and invasion. Extracellular domain enables binding to extracellular matrix proteins, such as laminin, integrin and other ligands while its intracellular domain interacts with cytoskeletal proteins like hemoglobin, facilitating cell signal transduction. Serves as a receptor for laminin alpha-5/LAMA5 to promote cell adhesion. Mechanistically, JAK2 induces BCAM phosphorylation and activates its adhesion to laminin by stimulating a Rap1/AKT signaling pathway in the absence of EPOR. This is Basal cell adhesion molecule (Bcam) from Rattus norvegicus (Rat).